Consider the following 126-residue polypeptide: Probable prefoldin subunit 6 (126 aa).

The protein belongs to the prefoldin subunit beta family. In terms of assembly, heterohexamer of two PFD-alpha type and four PFD-beta type subunits. In terms of tissue distribution, expressed in embryonic blastomeres and gonads.

The protein localises to the cytoplasm. Binds specifically to cytosolic chaperonin (c-CPN) and transfers target proteins to it. Binds to nascent polypeptide chain and promotes folding in an environment in which there are many competing pathways for nonnative proteins. Required for positioning of the mitotic spindle. In Caenorhabditis elegans, this protein is Probable prefoldin subunit 6 (pfd-6).